The primary structure comprises 1017 residues: Anaphase-promoting complex subunit 5 (1017 aa).

5 TPR repeats span residues 30–63 (KQSL…EKEL), 182–214 (DMSM…SPLD), 252–286 (VKRV…VNGQ), 337–370 (PYAV…AQER), and 508–541 (NNNN…WNDI). Low complexity predominate over residues 451–525 (INSNNYNSNN…NNNSSNSNNN (75 aa)). 2 disordered regions span residues 451–527 (INSN…NNGG) and 617–636 (NNNN…QQQN). TPR repeat units lie at residues 642 to 675 (LLSF…YKTQ), 756 to 790 (VICY…SRDF), 838 to 871 (ADSN…VLSD), 876 to 908 (SQLY…FLQL), and 931 to 964 (KEIY…LVPS).

It belongs to the APC5 family. The APC/C is composed of at least 13 subunits that stay tightly associated throughout the cell cycle: anapc1, anapc2, anapc3, anapc4, anapc5, anapc6, anapc7, anapc8, anapc10, anapc11, cdc20, cdc26 and cdh1.

It is found in the nucleus. It participates in protein modification; protein ubiquitination. Component of the anaphase promoting complex/cyclosome (APC/C), a cell cycle-regulated E3 ubiquitin-protein ligase complex that controls progression through mitosis and the G1 phase of the cell cycle. The chain is Anaphase-promoting complex subunit 5 (anapc5) from Dictyostelium discoideum (Social amoeba).